The primary structure comprises 360 residues: Phospho-N-acetylmuramoyl-pentapeptide-transferase (360 aa).

10 helical membrane-spanning segments follow: residues 21-41, 71-91, 94-114, 142-162, 168-188, 199-219, 236-256, 263-283, 288-308, and 338-358; these read YLTF…LWIG, TPTM…ILWA, SNPY…IGFI, LVVA…VLVV, IMPQ…VGAS, GLAI…AWAT, ASEL…FLWF, VFMG…IAVL, FLLF…ILQV, and VIVR…VTLK.

It belongs to the glycosyltransferase 4 family. MraY subfamily. Mg(2+) is required as a cofactor.

Its subcellular location is the cell inner membrane. The catalysed reaction is UDP-N-acetyl-alpha-D-muramoyl-L-alanyl-gamma-D-glutamyl-meso-2,6-diaminopimeloyl-D-alanyl-D-alanine + di-trans,octa-cis-undecaprenyl phosphate = di-trans,octa-cis-undecaprenyl diphospho-N-acetyl-alpha-D-muramoyl-L-alanyl-D-glutamyl-meso-2,6-diaminopimeloyl-D-alanyl-D-alanine + UMP. The protein operates within cell wall biogenesis; peptidoglycan biosynthesis. In terms of biological role, catalyzes the initial step of the lipid cycle reactions in the biosynthesis of the cell wall peptidoglycan: transfers peptidoglycan precursor phospho-MurNAc-pentapeptide from UDP-MurNAc-pentapeptide onto the lipid carrier undecaprenyl phosphate, yielding undecaprenyl-pyrophosphoryl-MurNAc-pentapeptide, known as lipid I. This is Phospho-N-acetylmuramoyl-pentapeptide-transferase from Tolumonas auensis (strain DSM 9187 / NBRC 110442 / TA 4).